The primary structure comprises 191 residues: NAD(P)H dehydrogenase (quinone) (191 aa).

The 181-residue stretch at 4-184 folds into the Flavodoxin-like domain; it reads ILVIFHSITG…VAKMLGKRVA (181 aa). Residues 10–15, 83–85, and 118–124 contribute to the FMN site; these read SITGNT, TRF, and SNEMPHG.

This sequence belongs to the WrbA family. As to quaternary structure, homodimer and homotetramer; in equilibrium. FMN is required as a cofactor.

It carries out the reaction a quinone + NADH + H(+) = a quinol + NAD(+). The enzyme catalyses a quinone + NADPH + H(+) = a quinol + NADP(+). It seems to function in response to environmental stress when various electron transfer chains are affected or when the environment is highly oxidizing. It reduces quinones to the hydroquinone state to prevent interaction of the semiquinone with O2 and production of superoxide. It prefers NADH over NADPH. The polypeptide is NAD(P)H dehydrogenase (quinone) (Archaeoglobus fulgidus (strain ATCC 49558 / DSM 4304 / JCM 9628 / NBRC 100126 / VC-16)).